Reading from the N-terminus, the 411-residue chain is MTEKELIESGNMKMEWARNHMPVLAIIREKFEKEKPLKGLKVGMALHVEAKTAVLVETLAAGGAQVAISGCNPLSTQDDVAAALDTRENINCFAKYGCCTGEYYEAIDRVLDIEPDITIDDGADLIFKLHKERQEMLAKILGGCEETTTGVHRLHAMEKDGALKMPVIAVNDAMTKYLFDNRYGTGQSAWDGINRTTNLLVAGKNVVVAGYGWCGRGVAMRATGLGASVIVTEIDPIRALEARMDGHRVMKMSEAAKIGDLFVTATGNRDILTADNFKVMKDGAILANSGHFNVEIDMEALDSLAKSTRTVRHNIKEYDIGNRRINVIAEGRLVNLAAGDGHPAEVMDMSFANQALCVRYIAENKLSSGVHGVPRELDTYVAKLKLESMGIATDELTSKQECYMSGWECGT.

Asp121 and Glu146 together coordinate substrate. 147 to 149 is a binding site for NAD(+); that stretch reads TTT. Lys176 and Asp180 together coordinate substrate. NAD(+) contacts are provided by residues Asn181, 210 to 215, Glu233, Asn268, 289 to 291, and Asn335; these read GYGWCG and SGH.

Belongs to the adenosylhomocysteinase family. NAD(+) serves as cofactor.

Its subcellular location is the cytoplasm. It carries out the reaction S-inosyl-L-homocysteine + H2O = L-homocysteine + inosine. It participates in amino-acid biosynthesis; S-adenosyl-L-methionine biosynthesis. In terms of biological role, catalyzes the hydrolysis of S-inosyl-L-homocysteine (SIH) to L-homocysteine (Hcy) and inosine. Likely functions in a S-adenosyl-L-methionine (SAM) recycling pathway from S-adenosyl-L-homocysteine (SAH) produced from SAM-dependent methylation reactions. Can also catalyze the reverse reaction in vitro, i.e. the synthesis of SIH from Hcy and inosine. This chain is S-inosyl-L-homocysteine hydrolase, found in Methanosarcina mazei (strain ATCC BAA-159 / DSM 3647 / Goe1 / Go1 / JCM 11833 / OCM 88) (Methanosarcina frisia).